The sequence spans 515 residues: Nuclear hormone receptor family member nhr-62 (515 aa).

Residues 95-170 constitute a DNA-binding region (nuclear receptor); sequence NLVCVVCGDQ…AGMNPRAVQS (76 aa). NR C4-type zinc fingers lie at residues 98–118 and 134–153; these read CVVC…CNGC and CRFE…CRAC. The segment at 169 to 195 is disordered; that stretch reads QSERVEREQNGSPNQIEEDDYKDLSSP. The NR LBD domain maps to 225 to 509; sequence EMAKLSEQIV…YLCHEVQFIQ (285 aa). Residues 498-509 form an AF-2 region; sequence SEYLCHEVQFIQ.

Belongs to the nuclear hormone receptor family. In terms of tissue distribution, widely expressed at a low level in many tissues including the pharynx, sensory neurons, intestine, spermatheca, hypodermis, and excretory cell.

The protein localises to the nucleus. Functionally, orphan nuclear hormone receptor. Required for metabolic and physiologic responses associated with dietary-restriction-induced longevity. Modulates triglyceride and lipid metabolism and autophagy, associated with dietary-restriction, probably acting via regulation of transcription of target genes. In Caenorhabditis elegans, this protein is Nuclear hormone receptor family member nhr-62 (nhr-62).